Consider the following 88-residue polypeptide: Elongation factor 1-beta (88 aa).

Belongs to the EF-1-beta/EF-1-delta family.

Promotes the exchange of GDP for GTP in EF-1-alpha/GDP, thus allowing the regeneration of EF-1-alpha/GTP that could then be used to form the ternary complex EF-1-alpha/GTP/AAtRNA. In Natronomonas pharaonis (strain ATCC 35678 / DSM 2160 / CIP 103997 / JCM 8858 / NBRC 14720 / NCIMB 2260 / Gabara) (Halobacterium pharaonis), this protein is Elongation factor 1-beta.